The primary structure comprises 376 residues: PqqA peptide cyclase (376 aa).

Residues 7–222 (VGLPLWLLAE…TNEYRDKLKA (216 aa)) form the Radical SAM core domain. [4Fe-4S] cluster is bound by residues C21, C25, and C28.

This sequence belongs to the radical SAM superfamily. PqqE family. In terms of assembly, interacts with PqqD. The interaction is necessary for activity of PqqE. It depends on [4Fe-4S] cluster as a cofactor.

It carries out the reaction [PQQ precursor protein] + S-adenosyl-L-methionine = E-Y cross-linked-[PQQ precursor protein] + 5'-deoxyadenosine + L-methionine + H(+). It functions in the pathway cofactor biosynthesis; pyrroloquinoline quinone biosynthesis. Functionally, catalyzes the cross-linking of a glutamate residue and a tyrosine residue in the PqqA protein as part of the biosynthesis of pyrroloquinoline quinone (PQQ). The chain is PqqA peptide cyclase from Pseudomonas putida (strain ATCC 700007 / DSM 6899 / JCM 31910 / BCRC 17059 / LMG 24140 / F1).